Consider the following 588-residue polypeptide: Ribonuclease Y (588 aa).

Residues 7–27 (VLLVAVLLLALIVLGAVLVGV) traverse the membrane as a helical segment. The disordered stretch occupies residues 130 to 162 (ARRSGEREAAVLATTTREQAAEVERRAARMDDR). Over residues 148–162 (QAAEVERRAARMDDR) the composition is skewed to basic and acidic residues. The KH domain occupies 278-359 (VVSVLHLPGD…HRIEEVHDLA (82 aa)). Positions 404 to 497 (VLKHLVETAH…TQASDACSGG (94 aa)) constitute an HD domain.

Belongs to the RNase Y family.

It localises to the cell membrane. Its function is as follows. Endoribonuclease that initiates mRNA decay. The sequence is that of Ribonuclease Y from Salinispora arenicola (strain CNS-205).